Reading from the N-terminus, the 78-residue chain is Translation initiation factor IF-1, chloroplastic (78 aa).

The region spanning 1-72 is the S1-like domain; it reads MKKQNLIDME…TKGRITYRLR (72 aa).

Belongs to the IF-1 family. In terms of assembly, component of the 30S ribosomal translation pre-initiation complex which assembles on the 30S ribosome in the order IF-2 and IF-3, IF-1 and N-formylmethionyl-tRNA(fMet); mRNA recruitment can occur at any time during PIC assembly.

Its subcellular location is the plastid. The protein localises to the chloroplast. Functionally, one of the essential components for the initiation of protein synthesis. Stabilizes the binding of IF-2 and IF-3 on the 30S subunit to which N-formylmethionyl-tRNA(fMet) subsequently binds. Helps modulate mRNA selection, yielding the 30S pre-initiation complex (PIC). Upon addition of the 50S ribosomal subunit IF-1, IF-2 and IF-3 are released leaving the mature 70S translation initiation complex. The sequence is that of Translation initiation factor IF-1, chloroplastic from Physcomitrium patens (Spreading-leaved earth moss).